An 86-amino-acid polypeptide reads, in one-letter code: Putative membrane protein insertion efficiency factor (86 aa).

The disordered stretch occupies residues 66–86; sequence PLHEGGDDPVPPRKNDDNREN.

It belongs to the UPF0161 family.

Its subcellular location is the cell inner membrane. Its function is as follows. Could be involved in insertion of integral membrane proteins into the membrane. This chain is Putative membrane protein insertion efficiency factor, found in Proteus mirabilis (strain HI4320).